A 418-amino-acid polypeptide reads, in one-letter code: S-adenosylmethionine synthase (418 aa).

His-16 serves as a coordination point for ATP. Asp-18 lines the Mg(2+) pocket. Glu-44 serves as a coordination point for K(+). L-methionine is bound by residues Glu-57 and Gln-100. Residues 100 to 110 (QSPDISQGVTK) are flexible loop. Residues 175–177 (DGK), 251–252 (KF), Asp-260, 266–267 (RK), Ala-283, and Lys-287 each bind ATP. Asp-260 contacts L-methionine. Lys-291 contributes to the L-methionine binding site.

Belongs to the AdoMet synthase family. Homotetramer; dimer of dimers. Mg(2+) serves as cofactor. Requires K(+) as cofactor.

The protein resides in the cytoplasm. It carries out the reaction L-methionine + ATP + H2O = S-adenosyl-L-methionine + phosphate + diphosphate. The protein operates within amino-acid biosynthesis; S-adenosyl-L-methionine biosynthesis; S-adenosyl-L-methionine from L-methionine: step 1/1. Catalyzes the formation of S-adenosylmethionine (AdoMet) from methionine and ATP. The overall synthetic reaction is composed of two sequential steps, AdoMet formation and the subsequent tripolyphosphate hydrolysis which occurs prior to release of AdoMet from the enzyme. The polypeptide is S-adenosylmethionine synthase (Gloeothece citriformis (strain PCC 7424) (Cyanothece sp. (strain PCC 7424))).